A 423-amino-acid polypeptide reads, in one-letter code: MGALLAKWRAKPSTVEVLEKMEKDIQSLEEFRDKNQKLRKIWVARLFFYSTILYILTSLTVYLWYLPDGMTARLLTMLLFLSFPVLIWFVRTLLILWFSRRTERNNDALELLKTEKKKILEEVMEKETYKAAKLILERFDPDSRKIKELELPVPGPPITPRPGQDLRQRTAAQRNISVSTPVNPGQESPQVPGLLAATPSLQRDTSAPGGPPERSVQPTPQSNILQRRPGSPATTVSGMAIHPPGPPLARPILPRERGAMDRVIEYLVGDGPQNRYALICQQCFSHNGMALKEEFEYVAFRCAYCYFLNPARKTRPQAPRLQEINFDRQRQRTDSQGSVSSVQPPAAEQLENPQSPEAMEEDSPAQAEEQAIEEDSTCSEQQWEEAPDDSEKDPSPVAELNPSESNPSPPAANETEESFMETE.

At 1–45 (MGALLAKWRAKPSTVEVLEKMEKDIQSLEEFRDKNQKLRKIWVAR) the chain is on the cytoplasmic side. Residues 16–40 (EVLEKMEKDIQSLEEFRDKNQKLRK) are a coiled coil. The chain crosses the membrane as a helical span at residues 46 to 66 (LFFYSTILYILTSLTVYLWYL). The Lumenal segment spans residues 67–77 (PDGMTARLLTM). A helical transmembrane segment spans residues 78–98 (LLFLSFPVLIWFVRTLLILWF). Residues 99–423 (SRRTERNNDA…ETEESFMETE (325 aa)) lie on the Cytoplasmic side of the membrane. Positions 101 to 128 (RTERNNDALELLKTEKKKILEEVMEKET) form a coiled coil. The segment at 147–169 (KELELPVPGPPITPRPGQDLRQR) is disordered. Phosphothreonine is present on Thr-159. Residues Ser-177, Ser-179, and Ser-188 each carry the phosphoserine modification. Position 198 is a phosphothreonine (Thr-198). Residues 200-247 (SLQRDTSAPGGPPERSVQPTPQSNILQRRPGSPATTVSGMAIHPPGPP) are disordered. A phosphoserine mark is found at Ser-206 and Ser-215. Polar residues predominate over residues 216–225 (VQPTPQSNIL). Thr-219 bears the Phosphothreonine mark. Phosphoserine occurs at positions 222 and 231. Residues 280-305 (CQQCFSHNGMALKEEFEYVAFRCAYC) form a C4-type; plays a role in ER morphology zinc finger. A disordered region spans residues 318–423 (APRLQEINFD…ETEESFMETE (106 aa)). The segment covering 334 to 343 (DSQGSVSSVQ) has biased composition (polar residues). 2 stretches are compositionally biased toward acidic residues: residues 370 to 391 (QAIE…DDSE) and 414 to 423 (ETEESFMETE).

Belongs to the lunapark family. In terms of assembly, homodimer; homodimerization requires the C4-type zinc finger motif and decreases during mitosis in a phosphorylation-dependent manner. Post-translationally, phosphorylated. Phosphorylation at Thr-159 occurs during interphase. Phosphorylation at Ser-177, Ser-179, Ser-188, Thr-198, Ser-206, Ser-215, Thr-219, Ser-222 and Ser-231 occurs during mitosis; these phosphorylations reduce both its homodimerization and the ER three-way tubular junction formation.

Its subcellular location is the endoplasmic reticulum membrane. Endoplasmic reticulum (ER)-shaping membrane protein that plays a role in determining ER morphology. Involved in the stabilization of nascent three-way ER tubular junctions within the ER network. May also play a role as a curvature-stabilizing protein within three-way ER tubular junction network. In Xenopus tropicalis (Western clawed frog), this protein is Endoplasmic reticulum junction formation protein lunapark (lnpk).